Here is a 264-residue protein sequence, read N- to C-terminus: Type III pantothenate kinase 2 (264 aa).

6–13 (DVGNTFTV) serves as a coordination point for ATP. Substrate-binding positions include tyrosine 100 and 107–110 (GADR). Aspartate 109 serves as the catalytic Proton acceptor. Aspartate 129 is a K(+) binding site. Threonine 132 is an ATP binding site. Threonine 184 contacts substrate.

Belongs to the type III pantothenate kinase family. As to quaternary structure, homodimer. NH4(+) serves as cofactor. The cofactor is K(+).

It is found in the cytoplasm. It carries out the reaction (R)-pantothenate + ATP = (R)-4'-phosphopantothenate + ADP + H(+). The protein operates within cofactor biosynthesis; coenzyme A biosynthesis; CoA from (R)-pantothenate: step 1/5. Functionally, catalyzes the phosphorylation of pantothenate (Pan), the first step in CoA biosynthesis. In Symbiobacterium thermophilum (strain DSM 24528 / JCM 14929 / IAM 14863 / T), this protein is Type III pantothenate kinase 2.